Consider the following 340-residue polypeptide: MNTRFLDACWGKPVDRVPVWLMRQAGRYLPEYMAVRSRCTFLELCKTPELAAQVSLQPVDILGVDAAILFSDILTPVEPMGMKLDFVPGPVFEKPVRCMADVERLRIPRMEDDLPFVFDIIRILRRELADRVPLIGFGGAPFTLACYMVEGKGSKDFVQIKRMMYSAPDVYAALMEKITTMSMEYLNAQIAAGAQAIQIFDTWGGILSPSDYRTHVLPHTTRLINGLNRLTTPVIHFVKGAGTMLETVREAGGDVIGLDWHVDLATARNQLGPGVAVQGNLDPTVLFAPQAVIEQQVQRVLDENRGLPGFIFNLGHGILPTVPAENARFMVQCVQRLSRS.

Substrate-binding positions include 23–27 (RQAGR), D72, Y147, T202, and H316.

The protein belongs to the uroporphyrinogen decarboxylase family. In terms of assembly, homodimer.

The protein resides in the cytoplasm. It catalyses the reaction uroporphyrinogen III + 4 H(+) = coproporphyrinogen III + 4 CO2. The protein operates within porphyrin-containing compound metabolism; protoporphyrin-IX biosynthesis; coproporphyrinogen-III from 5-aminolevulinate: step 4/4. Catalyzes the decarboxylation of four acetate groups of uroporphyrinogen-III to yield coproporphyrinogen-III. The sequence is that of Uroporphyrinogen decarboxylase from Pelobacter propionicus (strain DSM 2379 / NBRC 103807 / OttBd1).